Here is a 574-residue protein sequence, read N- to C-terminus: Laccase-12 (574 aa).

An N-terminal signal peptide occupies residues 1 to 27; that stretch reads MAAASSVLRCCLLVAALMTLSAMGAEA. Plastocyanin-like domains are found at residues 35–151 and 161–314; these read DVQT…PPAG and EEVP…YDDP. Asn81 is a glycosylation site (N-linked (GlcNAc...) asparagine). His85, His87, His130, and His132 together coordinate Cu cation. Asn173, Asn190, Asn206, Asn242, Asn302, Asn335, Asn342, Asn381, Asn388, Asn398, Asn434, Asn441, and Asn447 each carry an N-linked (GlcNAc...) asparagine glycan. In terms of domain architecture, Plastocyanin-like 3 spans 424-558; sequence NFPYYPLNPF…KMAWLVLDGS (135 aa). Cu cation contacts are provided by His475, His478, His480, His537, Cys538, His539, and His543.

It belongs to the multicopper oxidase family. It depends on Cu cation as a cofactor.

The protein localises to the secreted. It localises to the extracellular space. The protein resides in the apoplast. The enzyme catalyses 4 hydroquinone + O2 = 4 benzosemiquinone + 2 H2O. In terms of biological role, lignin degradation and detoxification of lignin-derived products. This Oryza sativa subsp. japonica (Rice) protein is Laccase-12 (LAC12).